We begin with the raw amino-acid sequence, 636 residues long: Chaperone protein DnaK (636 aa).

Threonine 203 carries the post-translational modification Phosphothreonine; by autocatalysis. The disordered stretch occupies residues 602–636; the sequence is VYGKQQEGAPAQEEPSAEGKKADDEGTVEGEFREV. Positions 618–636 are enriched in basic and acidic residues; the sequence is AEGKKADDEGTVEGEFREV.

Belongs to the heat shock protein 70 family.

Acts as a chaperone. The polypeptide is Chaperone protein DnaK (Dehalococcoides mccartyi (strain ATCC BAA-2100 / JCM 16839 / KCTC 5957 / BAV1)).